The following is a 590-amino-acid chain: Glutamine--tRNA ligase (590 aa).

The 'HIGH' region motif lies at 55–65 (PEPNGYLHIGH). ATP is bound by residues 56 to 58 (EPN) and 62 to 68 (HIGHAKS). Residues Asp93 and Tyr238 each coordinate L-glutamine. ATP is bound by residues Thr257 and 292 to 293 (RL). The short motif at 299–303 (ITSKR) is the 'KMSKS' region element.

The protein belongs to the class-I aminoacyl-tRNA synthetase family. As to quaternary structure, monomer.

The protein resides in the cytoplasm. The enzyme catalyses tRNA(Gln) + L-glutamine + ATP = L-glutaminyl-tRNA(Gln) + AMP + diphosphate. The sequence is that of Glutamine--tRNA ligase from Polynucleobacter asymbioticus (strain DSM 18221 / CIP 109841 / QLW-P1DMWA-1) (Polynucleobacter necessarius subsp. asymbioticus).